The sequence spans 1863 residues: Calcineurin-binding protein 1 (1863 aa).

3 TPR repeats span residues 30–65 (LSQTYHDGLLKLQAKDYDKARELLESILKDPIITNS), 81–116 (FLALKNLATVFLELGSSHYENALNCYLQAIDLDAKD), and 118–150 (VLWNHLGTLSCSMGLLSISRWAFEQGLLCSPNN). Residues 315–361 (ERESGGSVKEKEPVFSEEHPQERRSTRLERLRNQKPEKEGLEFDNSK) are disordered. TPR repeat units follow at residues 543-576 (ARYFWLSARLSILEDNKAKALEEYLRCLSLLGRE), 602-637 (IHEINLLKIDFLLENNIPEMMEKEFYSECVNLLAPL), 866-900 (INSPDGLGHDMGLPDKLCRNEVKSFLEEVHVEKNE), 955-988 (QCFFCLYGLNLRVDGSYEDELAVHKNTSRGDYQT), 990-1009 (EQCVDVFQYILPYAKASSRT), 1011-1031 (LVKLRRVLRAIKKHFSQPPDD), 1143-1183 (FESW…SQRV), 1226-1263 (VPFYDQRSVLPSKDATWTRFCENSMKHFNKAFSHRQDW), 1264-1297 (SHAFYMGKLSEKLGHSYEISLSYYKQAMTLNPSA), 1306-1339 (ASRLKLLNACGKQNLEALKVLASYCFDESIKDTA), 1377-1412 (EGVWHMLYNDSLSALGICVEGDLKHFHKARYMLAQG), and 1508-1541 (NSLRSDKRFSLCVEDLVPVAIGRYVKALVSSMSR). Residues 894-923 (VHVEKNENNKTESKKDGSEEQVGYREKEQS) show a composition bias toward basic and acidic residues. Residues 894–941 (VHVEKNENNKTESKKDGSEEQVGYREKEQSEQQSKQIPEHTEEVAEEE) are disordered. Residues 1813–1840 (KMKRGASTSSVVPSVQSGGTSEPEPAPK) form a disordered region. Over residues 1818-1832 (ASTSSVVPSVQSGGT) the composition is skewed to polar residues.

Component of the HIRA complex made of UBN1, UBN2, ASF1A, CABIN1 and HIRA. Expressed at low levels in seedlings.

Its subcellular location is the nucleus. Functionally, may be required for replication-independent chromatin assembly. The sequence is that of Calcineurin-binding protein 1 from Arabidopsis thaliana (Mouse-ear cress).